A 281-amino-acid polypeptide reads, in one-letter code: Protein-S-isoprenylcysteine O-methyltransferase (281 aa).

Over 1–2 (ML) the chain is Cytoplasmic. A helical transmembrane segment spans residues 3–29 (SPAGKISLQSFTGSSLVFFVICMFNHY). At 30–35 (YGITNL) the chain is on the lumenal side. The chain crosses the membrane as a helical span at residues 36-53 (VVNTLIVFFYAVNVYFFL). The Cytoplasmic portion of the chain corresponds to 54 to 58 (KFFYN). The helical transmembrane segment at 59–85 (EFAFAIAIRAAFLGLVLVLGLYIKLVA) threads the bilayer. At 86 to 88 (PPN) the chain is on the lumenal side. A helical membrane pass occupies residues 89–113 (IQIFGGYMSVMALFHYSEFLAIAIV). Topologically, residues 114–118 (QPKQV) are cytoplasmic. The chain crosses the membrane as a helical span at residues 119-149 (STDSFVINHSPQYTIAAVSSWVEFFIETYFF). The Lumenal segment spans residues 150-155 (PGLKEI). A helical membrane pass occupies residues 156–181 (HWLSNIGLCVCILGEVLRKTAILTAG). Residues 182-208 (SNFNHLVQCEKSSDHVLVTHGVYAWFR) are Cytoplasmic-facing. S-adenosyl-L-methionine contacts are provided by residues Gln189, 196–199 (HVLV), Tyr204, and 209–212 (HPSY). The helical transmembrane segment at 209–226 (HPSYVGWFYWSIGTQIIL) threads the bilayer. Residues 227–229 (INP) lie on the Lumenal side of the membrane. The helical transmembrane segment at 230 to 243 (LCIPAYTLASWMFF) threads the bilayer. Over 244–281 (KERIYIEESMLLSFFGQQYCDYQQQVGTGIPFIEGYKI) the chain is Cytoplasmic. Arg246 is a substrate binding site. An S-adenosyl-L-methionine-binding site is contributed by Glu250.

It belongs to the class VI-like SAM-binding methyltransferase superfamily. Isoprenylcysteine carboxyl methyltransferase family.

Its subcellular location is the endoplasmic reticulum membrane. It carries out the reaction [protein]-C-terminal S-[(2E,6E)-farnesyl]-L-cysteine + S-adenosyl-L-methionine = [protein]-C-terminal S-[(2E,6E)-farnesyl]-L-cysteine methyl ester + S-adenosyl-L-homocysteine. Its function is as follows. Catalyzes the post-translational methylation of isoprenylated C-terminal cysteine residues. This is Protein-S-isoprenylcysteine O-methyltransferase from Tribolium castaneum (Red flour beetle).